Here is a 283-residue protein sequence, read N- to C-terminus: Protein/nucleic acid deglycase HchA (283 aa).

Positions 86, 91, and 123 each coordinate Zn(2+). The active-site Nucleophile is the cysteine 185.

It belongs to the peptidase C56 family. HchA subfamily. Homodimer.

Its subcellular location is the cytoplasm. It carries out the reaction N(omega)-(1-hydroxy-2-oxopropyl)-L-arginyl-[protein] + H2O = lactate + L-arginyl-[protein] + H(+). The enzyme catalyses N(6)-(1-hydroxy-2-oxopropyl)-L-lysyl-[protein] + H2O = lactate + L-lysyl-[protein] + H(+). It catalyses the reaction S-(1-hydroxy-2-oxopropyl)-L-cysteinyl-[protein] + H2O = lactate + L-cysteinyl-[protein] + H(+). The catalysed reaction is N(omega)-(1-hydroxy-2-oxoethyl)-L-arginyl-[protein] + H2O = L-arginyl-[protein] + glycolate + H(+). It carries out the reaction N(6)-(1-hydroxy-2-oxoethyl)-L-lysyl-[protein] + H2O = glycolate + L-lysyl-[protein] + H(+). The enzyme catalyses S-(1-hydroxy-2-oxoethyl)-L-cysteinyl-[protein] + H2O = glycolate + L-cysteinyl-[protein] + H(+). It catalyses the reaction N(2)-(1-hydroxy-2-oxopropyl)-dGTP + H2O = lactate + dGTP + H(+). The catalysed reaction is N(2)-(1-hydroxy-2-oxopropyl)-GTP + H2O = lactate + GTP + H(+). It carries out the reaction N(2)-(1-hydroxy-2-oxopropyl)-GDP + H2O = lactate + GDP + H(+). The enzyme catalyses N(2)-(1-hydroxy-2-oxopropyl)-GMP + H2O = lactate + GMP + H(+). It catalyses the reaction N(2)-(1-hydroxy-2-oxoethyl)-dGTP + H2O = dGTP + glycolate + H(+). The catalysed reaction is N(2)-(1-hydroxy-2-oxoethyl)-GTP + H2O = glycolate + GTP + H(+). It carries out the reaction N(2)-(1-hydroxy-2-oxoethyl)-GDP + H2O = glycolate + GDP + H(+). The enzyme catalyses N(2)-(1-hydroxy-2-oxoethyl)-GMP + H2O = glycolate + GMP + H(+). It catalyses the reaction an N(2)-(1-hydroxy-2-oxopropyl)-guanosine in RNA + H2O = a guanosine in RNA + lactate + H(+). The catalysed reaction is an N(2)-(1-hydroxy-2-oxopropyl)-2'-deoxyguanosine in DNA + H2O = a 2'-deoxyguanosine in DNA + lactate + H(+). It carries out the reaction an N(2)-(1-hydroxy-2-oxoethyl)-guanosine in RNA + H2O = a guanosine in RNA + glycolate + H(+). The enzyme catalyses an N(2)-(1-hydroxy-2-oxoethyl)-2'-deoxyguanosine in DNA + H2O = a 2'-deoxyguanosine in DNA + glycolate + H(+). Functionally, protein and nucleotide deglycase that catalyzes the deglycation of the Maillard adducts formed between amino groups of proteins or nucleotides and reactive carbonyl groups of glyoxals. Thus, functions as a protein deglycase that repairs methylglyoxal- and glyoxal-glycated proteins, and releases repaired proteins and lactate or glycolate, respectively. Deglycates cysteine, arginine and lysine residues in proteins, and thus reactivates these proteins by reversing glycation by glyoxals. Acts on early glycation intermediates (hemithioacetals and aminocarbinols), preventing the formation of Schiff bases and advanced glycation endproducts (AGE). Also functions as a nucleotide deglycase able to repair glycated guanine in the free nucleotide pool (GTP, GDP, GMP, dGTP) and in DNA and RNA. Is thus involved in a major nucleotide repair system named guanine glycation repair (GG repair), dedicated to reversing methylglyoxal and glyoxal damage via nucleotide sanitization and direct nucleic acid repair. Plays an important role in protecting cells from carbonyl stress. The chain is Protein/nucleic acid deglycase HchA from Escherichia coli (strain 55989 / EAEC).